The chain runs to 377 residues: Chaperone protein DnaJ (377 aa).

Positions 5-69 (DYYEVLGISK…QKRAQYDQYG (65 aa)) constitute a J domain. The CR-type zinc-finger motif lies at 134–216 (GKDAEIEIPR…CHGKGRVTKT (83 aa)). Residues C147, C150, C164, C167, C190, C193, C204, and C207 each contribute to the Zn(2+) site. CXXCXGXG motif repeat units lie at residues 147-154 (CDTCHGSG), 164-171 (CSHCGGKG), 190-197 (CQYCNGTG), and 204-211 (CPTCHGKG).

The protein belongs to the DnaJ family. As to quaternary structure, homodimer. Requires Zn(2+) as cofactor.

The protein localises to the cytoplasm. Participates actively in the response to hyperosmotic and heat shock by preventing the aggregation of stress-denatured proteins and by disaggregating proteins, also in an autonomous, DnaK-independent fashion. Unfolded proteins bind initially to DnaJ; upon interaction with the DnaJ-bound protein, DnaK hydrolyzes its bound ATP, resulting in the formation of a stable complex. GrpE releases ADP from DnaK; ATP binding to DnaK triggers the release of the substrate protein, thus completing the reaction cycle. Several rounds of ATP-dependent interactions between DnaJ, DnaK and GrpE are required for fully efficient folding. Also involved, together with DnaK and GrpE, in the DNA replication of plasmids through activation of initiation proteins. In Listeria monocytogenes serotype 1/2a (strain 10403S), this protein is Chaperone protein DnaJ.